Reading from the N-terminus, the 95-residue chain is Phosphoribosyl-ATP pyrophosphatase (95 aa).

Belongs to the PRA-PH family.

It is found in the cytoplasm. It carries out the reaction 1-(5-phospho-beta-D-ribosyl)-ATP + H2O = 1-(5-phospho-beta-D-ribosyl)-5'-AMP + diphosphate + H(+). Its pathway is amino-acid biosynthesis; L-histidine biosynthesis; L-histidine from 5-phospho-alpha-D-ribose 1-diphosphate: step 2/9. The polypeptide is Phosphoribosyl-ATP pyrophosphatase (Sulfolobus acidocaldarius (strain ATCC 33909 / DSM 639 / JCM 8929 / NBRC 15157 / NCIMB 11770)).